Reading from the N-terminus, the 350-residue chain is Methylthioribose-1-phosphate isomerase (350 aa).

Aspartate 241 serves as the catalytic Proton donor.

It belongs to the eIF-2B alpha/beta/delta subunits family. MtnA subfamily.

Its subcellular location is the cytoplasm. It is found in the nucleus. It carries out the reaction 5-(methylsulfanyl)-alpha-D-ribose 1-phosphate = 5-(methylsulfanyl)-D-ribulose 1-phosphate. The protein operates within amino-acid biosynthesis; L-methionine biosynthesis via salvage pathway; L-methionine from S-methyl-5-thio-alpha-D-ribose 1-phosphate: step 1/6. Its function is as follows. Catalyzes the interconversion of methylthioribose-1-phosphate (MTR-1-P) into methylthioribulose-1-phosphate (MTRu-1-P). This chain is Methylthioribose-1-phosphate isomerase, found in Nematostella vectensis (Starlet sea anemone).